The sequence spans 206 residues: MARYIGPVGKVSRRLGIGITEKGLRILNKRSDPPGQHGAAARRRQLSDYGMQLREKQKAKFLYGVLERQFRRLFEQASRRSGVTGEYLLSLLERRLDNVVYRLGFATTRAQARQLVNHGHIVVDGRKTNIPSYTVKVGQVIAVRPQSRSRTYFKNLVDSGVLNKHRAPEWLRLNAAELSGTVVALPRREDAEAGINEQLIVEFYSR.

The S4 RNA-binding domain maps to 94–157; sequence RRLDNVVYRL…RSRTYFKNLV (64 aa).

Belongs to the universal ribosomal protein uS4 family. As to quaternary structure, part of the 30S ribosomal subunit. Contacts protein S5. The interaction surface between S4 and S5 is involved in control of translational fidelity.

One of the primary rRNA binding proteins, it binds directly to 16S rRNA where it nucleates assembly of the body of the 30S subunit. In terms of biological role, with S5 and S12 plays an important role in translational accuracy. This chain is Small ribosomal subunit protein uS4, found in Chloroflexus aurantiacus (strain ATCC 29364 / DSM 637 / Y-400-fl).